A 229-amino-acid polypeptide reads, in one-letter code: MKKIIALMLFLTFFAHANDSEPGSQYLKAAEAGDRRAQYFLADSWFSSGDLSKAEYWAQKAADSGDADACALLAQIKITNPVSLDYPQAKVLAEKAAQAGSKEGEVTLAHILVNTQAGKPDYPKAISLLENASEDLENDSAVDAQMLLGLIYANGVGIKADDDKATWYFKRSSAISRTGYSEYWAGMMFLNGEEGFIEKNKQKALHWLNLSCMEGFDTGCEEFEKLTNG.

Positions 1-17 (MKKIIALMLFLTFFAHA) are cleaved as a signal peptide.

This is an uncharacterized protein from Escherichia coli O157:H7.